The primary structure comprises 266 residues: Type III pantothenate kinase (266 aa).

9 to 16 (DAGNSRIK) is an ATP binding site. Substrate-binding positions include Tyr-96 and 103-106 (GSDR). Asp-105 functions as the Proton acceptor in the catalytic mechanism. Thr-129 provides a ligand contact to ATP. Thr-189 contacts substrate.

This sequence belongs to the type III pantothenate kinase family. Homodimer. The cofactor is NH4(+). K(+) is required as a cofactor.

Its subcellular location is the cytoplasm. It carries out the reaction (R)-pantothenate + ATP = (R)-4'-phosphopantothenate + ADP + H(+). It participates in cofactor biosynthesis; coenzyme A biosynthesis; CoA from (R)-pantothenate: step 1/5. Functionally, catalyzes the phosphorylation of pantothenate (Pan), the first step in CoA biosynthesis. This Burkholderia lata (strain ATCC 17760 / DSM 23089 / LMG 22485 / NCIMB 9086 / R18194 / 383) protein is Type III pantothenate kinase.